A 385-amino-acid polypeptide reads, in one-letter code: Homoserine O-succinyltransferase (385 aa).

Residues 51 to 360 (NAVLICHALS…DSPHGHDAFL (310 aa)) form the AB hydrolase-1 domain. The active-site Nucleophile is the Ser-157. Arg-227 provides a ligand contact to substrate. Catalysis depends on residues Asp-323 and His-356. Substrate is bound at residue Asp-357.

It belongs to the AB hydrolase superfamily. MetX family. Homodimer.

It localises to the cytoplasm. The enzyme catalyses L-homoserine + succinyl-CoA = O-succinyl-L-homoserine + CoA. It functions in the pathway amino-acid biosynthesis; L-methionine biosynthesis via de novo pathway; O-succinyl-L-homoserine from L-homoserine: step 1/1. Its function is as follows. Transfers a succinyl group from succinyl-CoA to L-homoserine, forming succinyl-L-homoserine. This is Homoserine O-succinyltransferase from Hahella chejuensis (strain KCTC 2396).